The primary structure comprises 267 residues: Glucosamine-6-phosphate deaminase (267 aa).

Aspartate 72 serves as the catalytic Proton acceptor; for enolization step. The active-site For ring-opening step is aspartate 141. Residue histidine 143 is the Proton acceptor; for ring-opening step of the active site. The active-site For ring-opening step is glutamate 148.

The protein belongs to the glucosamine/galactosamine-6-phosphate isomerase family. NagB subfamily. Homohexamer.

It carries out the reaction alpha-D-glucosamine 6-phosphate + H2O = beta-D-fructose 6-phosphate + NH4(+). It functions in the pathway amino-sugar metabolism; N-acetylneuraminate degradation; D-fructose 6-phosphate from N-acetylneuraminate: step 5/5. Allosterically activated by N-acetylglucosamine 6-phosphate (GlcNAc6P). Catalyzes the reversible isomerization-deamination of glucosamine 6-phosphate (GlcN6P) to form fructose 6-phosphate (Fru6P) and ammonium ion. The chain is Glucosamine-6-phosphate deaminase from Mannheimia succiniciproducens (strain KCTC 0769BP / MBEL55E).